A 252-amino-acid chain; its full sequence is Phosphoglycolate phosphatase (252 aa).

The active-site Nucleophile is the aspartate 13. Residues aspartate 13, aspartate 15, and aspartate 192 each coordinate Mg(2+).

The protein belongs to the HAD-like hydrolase superfamily. CbbY/CbbZ/Gph/YieH family. As to quaternary structure, monomer. Mg(2+) serves as cofactor. The cofactor is chloride.

It catalyses the reaction 2-phosphoglycolate + H2O = glycolate + phosphate. The protein operates within organic acid metabolism; glycolate biosynthesis; glycolate from 2-phosphoglycolate: step 1/1. In terms of biological role, specifically catalyzes the dephosphorylation of 2-phosphoglycolate. Is involved in the dissimilation of the intracellular 2-phosphoglycolate formed during the DNA repair of 3'-phosphoglycolate ends, a major class of DNA lesions induced by oxidative stress. The protein is Phosphoglycolate phosphatase of Salmonella choleraesuis (strain SC-B67).